We begin with the raw amino-acid sequence, 1002 residues long: UPF0182 protein alr1037 (1002 aa).

9 helical membrane-spanning segments follow: residues 7-29, 49-71, 123-145, 178-200, 202-224, 258-280, 300-319, 339-361, and 382-404; these read FRLS…LGAE, RGVL…LALA, LRWL…VHYG, QVFS…LIYS, FFLR…YNWA, LLEL…TYLL, HLYG…YWLS, VVVQ…FYLL, and GAYL…YLIV.

It belongs to the UPF0182 family.

The protein localises to the cell membrane. The protein is UPF0182 protein alr1037 of Nostoc sp. (strain PCC 7120 / SAG 25.82 / UTEX 2576).